Here is a 515-residue protein sequence, read N- to C-terminus: ATP synthase subunit alpha (515 aa).

171-178 contributes to the ATP binding site; the sequence is GDRQTGKT.

The protein belongs to the ATPase alpha/beta chains family. As to quaternary structure, F-type ATPases have 2 components, CF(1) - the catalytic core - and CF(0) - the membrane proton channel. CF(1) has five subunits: alpha(3), beta(3), gamma(1), delta(1), epsilon(1). CF(0) has three main subunits: a(1), b(2) and c(9-12). The alpha and beta chains form an alternating ring which encloses part of the gamma chain. CF(1) is attached to CF(0) by a central stalk formed by the gamma and epsilon chains, while a peripheral stalk is formed by the delta and b chains.

It localises to the cell inner membrane. The enzyme catalyses ATP + H2O + 4 H(+)(in) = ADP + phosphate + 5 H(+)(out). In terms of biological role, produces ATP from ADP in the presence of a proton gradient across the membrane. The alpha chain is a regulatory subunit. The protein is ATP synthase subunit alpha of Xanthomonas campestris pv. campestris (strain 8004).